Consider the following 341-residue polypeptide: UDP-3-O-acylglucosamine N-acyltransferase 2 (341 aa).

His-254 (proton acceptor) is an active-site residue.

Belongs to the transferase hexapeptide repeat family. LpxD subfamily. As to quaternary structure, homotrimer.

It catalyses the reaction a UDP-3-O-[(3R)-3-hydroxyacyl]-alpha-D-glucosamine + a (3R)-hydroxyacyl-[ACP] = a UDP-2-N,3-O-bis[(3R)-3-hydroxyacyl]-alpha-D-glucosamine + holo-[ACP] + H(+). The protein operates within bacterial outer membrane biogenesis; LPS lipid A biosynthesis. In terms of biological role, catalyzes the N-acylation of UDP-3-O-acylglucosamine using 3-hydroxyacyl-ACP as the acyl donor. Is involved in the biosynthesis of lipid A, a phosphorylated glycolipid that anchors the lipopolysaccharide to the outer membrane of the cell. The protein is UDP-3-O-acylglucosamine N-acyltransferase 2 of Nitrobacter winogradskyi (strain ATCC 25391 / DSM 10237 / CIP 104748 / NCIMB 11846 / Nb-255).